Reading from the N-terminus, the 176-residue chain is Tumor necrosis factor receptor superfamily member 23 (176 aa).

The first 29 residues, 1–29 (MVTFSHVSSLSHWFLLLLLLNLFLPVIFA), serve as a signal peptide directing secretion. TNFR-Cys repeat units follow at residues 37–72 (NCPD…QGQC), 74–114 (KCHP…DRKC), and 115–155 (ECQI…NTVC). 9 disulfides stabilise this stretch: Cys-38–Cys-49, Cys-50–Cys-63, Cys-53–Cys-72, Cys-75–Cys-90, Cys-93–Cys-106, Cys-96–Cys-114, Cys-116–Cys-131, Cys-134–Cys-147, and Cys-137–Cys-155. The N-linked (GlcNAc...) asparagine glycan is linked to Asn-148. Residue Cys-155 is the site of GPI-anchor amidated cysteine attachment. The propeptide at 156–176 (SSSVSNPRNWLFLLMLIVFCI) is removed in mature form.

Ubiquitous.

It is found in the cell membrane. Functionally, receptor for the cytotoxic ligand TRAIL. Lacks a cytoplasmic death domain and hence is not capable of inducing apoptosis. May protect cells against TRAIL mediated apoptosis through ligand competition. Cannot induce the NF-kappa-B pathway. This is Tumor necrosis factor receptor superfamily member 23 (Tnfrsf23) from Mus musculus (Mouse).